A 129-amino-acid polypeptide reads, in one-letter code: Large ribosomal subunit protein uL22 (129 aa).

The protein belongs to the universal ribosomal protein uL22 family. Part of the 50S ribosomal subunit.

This protein binds specifically to 23S rRNA; its binding is stimulated by other ribosomal proteins, e.g. L4, L17, and L20. It is important during the early stages of 50S assembly. It makes multiple contacts with different domains of the 23S rRNA in the assembled 50S subunit and ribosome. Functionally, the globular domain of the protein is located near the polypeptide exit tunnel on the outside of the subunit, while an extended beta-hairpin is found that lines the wall of the exit tunnel in the center of the 70S ribosome. The chain is Large ribosomal subunit protein uL22 from Brucella suis biovar 1 (strain 1330).